A 1005-amino-acid polypeptide reads, in one-letter code: Espin-like protein (1005 aa).

ANK repeat units lie at residues 1 to 31 (MEAQ…RPDI), 35 to 64 (LGAG…LPGN), 69 to 99 (NGAT…GLQD), 103 to 132 (SGVS…AATL), 136 to 166 (EGAL…GVNQ), 170 to 200 (SGAS…DVRL), 204 to 234 (DGMS…GLTA), 238 to 267 (EGAT…PIMR), 270 to 299 (WGGT…DPFL), and 303 to 332 (DGYT…PVRV). 2 disordered regions span residues 355–383 (EERR…VPRE) and 458–480 (ADHP…AAEQ). Over residues 458–469 (ADHPPEDQDQSQ) the composition is skewed to basic and acidic residues. A coiled-coil region spans residues 502–539 (EDDLVYLEKQINDLQLRRRCQEYESELGRLAAQLQALL). Disordered regions lie at residues 611-643 (LAQG…QREI), 692-729 (PRGD…GPGL), 764-794 (LEAQ…PRLG), and 951-975 (PHAS…SQGS).

In terms of assembly, interacts with MYO3A (via C-terminus). Interacts with MYO3B (via C-terminus). In terms of tissue distribution, expressed in inner ear hair cells. Expressed in utricle hair bundles (at protein level). Expressed in choclea (at protein level).

The protein resides in the cell projection. It localises to the stereocilium. In terms of biological role, binds to but does not cross-link actin. Required for the formation and maintenance of inner ear hair cell stereocilia and staircase formation. Essential for normal hearing. The polypeptide is Espin-like protein (Espnl) (Mus musculus (Mouse)).